Here is a 493-residue protein sequence, read N- to C-terminus: Probable protein phosphatase 2C 40 (493 aa).

In terms of domain architecture, PPM-type phosphatase spans 145-480 (LLSAMEVQVA…DDVTIMVITL (336 aa)). Positions 180, 181, 408, and 471 each coordinate Mn(2+).

The protein belongs to the PP2C family. It depends on Mg(2+) as a cofactor. The cofactor is Mn(2+).

The enzyme catalyses O-phospho-L-seryl-[protein] + H2O = L-seryl-[protein] + phosphate. It catalyses the reaction O-phospho-L-threonyl-[protein] + H2O = L-threonyl-[protein] + phosphate. This Arabidopsis thaliana (Mouse-ear cress) protein is Probable protein phosphatase 2C 40.